The chain runs to 166 residues: NAD(P)H-quinone oxidoreductase subunit I, chloroplastic (166 aa).

4Fe-4S ferredoxin-type domains are found at residues 55 to 84 and 95 to 124; these read GRIH…VDWK and LNYS…MTEE. The [4Fe-4S] cluster site is built by C64, C67, C70, C74, C104, C107, C110, and C114.

It belongs to the complex I 23 kDa subunit family. In terms of assembly, NDH is composed of at least 16 different subunits, 5 of which are encoded in the nucleus. The cofactor is [4Fe-4S] cluster.

The protein resides in the plastid. It is found in the chloroplast thylakoid membrane. The catalysed reaction is a plastoquinone + NADH + (n+1) H(+)(in) = a plastoquinol + NAD(+) + n H(+)(out). The enzyme catalyses a plastoquinone + NADPH + (n+1) H(+)(in) = a plastoquinol + NADP(+) + n H(+)(out). In terms of biological role, NDH shuttles electrons from NAD(P)H:plastoquinone, via FMN and iron-sulfur (Fe-S) centers, to quinones in the photosynthetic chain and possibly in a chloroplast respiratory chain. The immediate electron acceptor for the enzyme in this species is believed to be plastoquinone. Couples the redox reaction to proton translocation, and thus conserves the redox energy in a proton gradient. The protein is NAD(P)H-quinone oxidoreductase subunit I, chloroplastic of Chaenactis santolinoides (Santolina pincushion).